Consider the following 194-residue polypeptide: Adapter protein MecA 2 (194 aa).

Belongs to the MecA family. Homodimer.

Its function is as follows. Enables the recognition and targeting of unfolded and aggregated proteins to the ClpC protease or to other proteins involved in proteolysis. Also involved in Spx degradation by ClpC. Acts negatively in the development of competence by binding ComK and recruiting it to the ClpCP protease. When overexpressed, inhibits sporulation. This Bacillus subtilis (strain 168) protein is Adapter protein MecA 2 (mecB).